Consider the following 367-residue polypeptide: TATA-box-binding protein-like (367 aa).

The tract at residues 1–26 (MKKQSKTHKVDYKYYNSGSKTSRNRN) is disordered. Residues 16-26 (NSGSKTSRNRN) are compositionally biased toward polar residues.

This sequence belongs to the TBP family.

The protein is TATA-box-binding protein-like of Acanthamoeba polyphaga (Amoeba).